A 254-amino-acid chain; its full sequence is MKIYIITIFPDYFECFKNYGVVNKAIKSGLVEINTINLRDFTSDKHKTVDDVVYGGGPGMLLKPEPIFKAFDYIKNISKNPYTIITEPWGKTFNQEMARKLAEKEELVIICGRYEGVDERVKTLVDEEISIGDYILSGGEPATLVIMDSVIRLLPGVLSDDESKEVDSFSDGLLGYPNYTRPAEFRGMKVPEVLLSGNHKLIEKWRRFQKLKRTYKNRPDLLEKAKLSVEDKQLLKYIIEGKEFEDLIKEGKIA.

S-adenosyl-L-methionine contacts are provided by residues Gly-112 and 131–136 (IGDYIL).

It belongs to the RNA methyltransferase TrmD family. Homodimer.

It localises to the cytoplasm. It catalyses the reaction guanosine(37) in tRNA + S-adenosyl-L-methionine = N(1)-methylguanosine(37) in tRNA + S-adenosyl-L-homocysteine + H(+). In terms of biological role, specifically methylates guanosine-37 in various tRNAs. The protein is tRNA (guanine-N(1)-)-methyltransferase of Sulfurihydrogenibium sp. (strain YO3AOP1).